The primary structure comprises 238 residues: Calmodulin-binding protein 25 (238 aa).

Over residues 68–78 (STNTLSSTVSG) the composition is skewed to polar residues. The disordered stretch occupies residues 68-87 (STNTLSSTVSGASDPEIIGG). A Bipartite nuclear localization signal motif is present at residues 92–108 (KRNCLLTDGKAAKRRAR). The short motif at 125–134 (FRQMVQQVTG) is the VQ element. The tract at residues 201–220 (SSVGLPSGKPSATADPGGSA) is disordered.

Interacts with calmodulin (CaM). Interacts with WRKY25 and WRKY51. In terms of tissue distribution, expressed in leaves, flowers and siliques.

The protein localises to the nucleus. Calmodulin-binding protein that functions as a negative regulator of osmotic stress tolerance. This is Calmodulin-binding protein 25 from Arabidopsis thaliana (Mouse-ear cress).